Consider the following 100-residue polypeptide: NADH-quinone oxidoreductase subunit K (100 aa).

3 helical membrane passes run 4 to 24 (LTHG…GLVI), 28 to 48 (LLFM…AFVV), and 60 to 80 (VMYI…LALL).

Belongs to the complex I subunit 4L family. In terms of assembly, NDH-1 is composed of 13 different subunits. Subunits NuoA, H, J, K, L, M, N constitute the membrane sector of the complex.

The protein resides in the cell inner membrane. It carries out the reaction a quinone + NADH + 5 H(+)(in) = a quinol + NAD(+) + 4 H(+)(out). In terms of biological role, NDH-1 shuttles electrons from NADH, via FMN and iron-sulfur (Fe-S) centers, to quinones in the respiratory chain. The immediate electron acceptor for the enzyme in this species is believed to be ubiquinone. Couples the redox reaction to proton translocation (for every two electrons transferred, four hydrogen ions are translocated across the cytoplasmic membrane), and thus conserves the redox energy in a proton gradient. This is NADH-quinone oxidoreductase subunit K from Enterobacter sp. (strain 638).